A 217-amino-acid chain; its full sequence is Probable ribonuclease P protein subunit 1 (217 aa).

Belongs to the eukaryotic/archaeal RNase P protein component 1 family.

It is found in the nucleus. The protein localises to the nucleolus. It carries out the reaction Endonucleolytic cleavage of RNA, removing 5'-extranucleotides from tRNA precursor.. Part of ribonuclease P, a protein complex that generates mature tRNA molecules by cleaving their 5'-ends. This Schizosaccharomyces pombe (strain 972 / ATCC 24843) (Fission yeast) protein is Probable ribonuclease P protein subunit 1.